Here is a 282-residue protein sequence, read N- to C-terminus: Armadillo repeat-containing protein 1 (282 aa).

Residue M1 is modified to N-acetylmethionine. An ARM repeat occupies 39 to 81; the sequence is GCLPGLILSMDHPNPPVVHSALLALRYLAECRANREKMKGELG. T137 carries the phosphothreonine modification. S189, S246, S260, and S267 each carry phosphoserine. The interval 239–261 is disordered; the sequence is DYLPEDESPTKEQDKAVSRVGSH. Basic and acidic residues predominate over residues 246 to 255; the sequence is SPTKEQDKAV.

Interacts with mitochondrial contact site and cristae organizing system (MICOS) complex components IMMT/MIC60 and MICOS10/MIC10. Interacts with mitochondrial outer membrane sorting assembly machinery (SAM) complex components SAMM50 and MTX1.

It localises to the cytoplasm. The protein localises to the mitochondrion. It is found in the mitochondrion outer membrane. In association with mitochondrial contact site and cristae organizing system (MICOS) complex components and mitochondrial outer membrane sorting assembly machinery (SAM) complex components may regulate mitochondrial dynamics playing a role in determining mitochondrial length, distribution and motility. The polypeptide is Armadillo repeat-containing protein 1 (ARMC1) (Pongo abelii (Sumatran orangutan)).